The primary structure comprises 348 residues: tRNA N6-adenosine threonylcarbamoyltransferase (348 aa).

Residues His-115 and His-119 each coordinate Fe cation. Substrate is bound by residues 138–142, Asp-171, Gly-184, and Asn-276; that span reads LVSGG. Asp-304 lines the Fe cation pocket.

Belongs to the KAE1 / TsaD family. Fe(2+) serves as cofactor.

It localises to the cytoplasm. The enzyme catalyses L-threonylcarbamoyladenylate + adenosine(37) in tRNA = N(6)-L-threonylcarbamoyladenosine(37) in tRNA + AMP + H(+). Functionally, required for the formation of a threonylcarbamoyl group on adenosine at position 37 (t(6)A37) in tRNAs that read codons beginning with adenine. Is involved in the transfer of the threonylcarbamoyl moiety of threonylcarbamoyl-AMP (TC-AMP) to the N6 group of A37, together with TsaE and TsaB. TsaD likely plays a direct catalytic role in this reaction. This Xylella fastidiosa (strain M23) protein is tRNA N6-adenosine threonylcarbamoyltransferase.